The primary structure comprises 490 residues: Pleckstrin homology domain-containing family O member 2 (490 aa).

A PH domain is found at 18–119 (MVDKAGWIKK…WIKALNEGIN (102 aa)). Phosphoserine occurs at positions 164 and 167. Residues 173–402 (LDLDVPDSGP…DLLGEGPRHP (230 aa)) are disordered. Positions 230-243 (APTPVSASSEVSPE) are enriched in low complexity. T232 is subject to Phosphothreonine. Residues S235, S237, and S238 each carry the phosphoserine modification. The span at 244-257 (SQEDSETPAEEDSG) shows a compositional bias: acidic residues. S273 is subject to Phosphoserine. Low complexity predominate over residues 277–297 (PSPQEAPAAESAEPSQAPCSE). T298 and T311 each carry phosphothreonine. S390 and S468 each carry phosphoserine. The stretch at 439–481 (SAETLLSQAVEQLRQATQVLQEMRDLGELSQEAPGLREKRKEL) forms a coiled coil.

This is Pleckstrin homology domain-containing family O member 2 (PLEKHO2) from Homo sapiens (Human).